The following is an 858-amino-acid chain: Elongation factor 2 (858 aa).

The 346-residue stretch at 17 to 362 (ANIRNMSVIA…MITIHLPSPV (346 aa)) folds into the tr-type G domain. 26 to 33 (AHVDHGKS) is a GTP binding site. Thr54 carries the phosphothreonine modification. Thr57 is subject to Phosphothreonine; by EEF2K. Phosphothreonine is present on Thr59. Lys152 bears the N6-succinyllysine mark. Residues 158–161 (NKMD) and 216–218 (SGL) contribute to the GTP site. Position 235 is an N6-acetyllysine (Lys235). The residue at position 239 (Lys239) is an N6-acetyllysine; alternate. Residue Lys239 forms a Glycyl lysine isopeptide (Lys-Gly) (interchain with G-Cter in SUMO1); alternate linkage. Tyr265 is subject to Phosphotyrosine; by CSK. Lys272 is subject to N6-acetyllysine; alternate. Lys272 is modified (N6-succinyllysine; alternate). N6-acetyllysine is present on Lys275. Lys322 is covalently cross-linked (Glycyl lysine isopeptide (Lys-Gly) (interchain with G-Cter in SUMO)). A Phosphoserine modification is found at Ser325. Phosphotyrosine; by CSK is present on Tyr373. Residue Thr435 is modified to Phosphothreonine. Residues Lys439 and Lys445 each carry the N6-acetyllysine modification. Residue Ser502 is modified to Phosphoserine. N6,N6,N6-trimethyllysine; by EEF2KMT is present on Lys525. Lys529 participates in a covalent cross-link: Glycyl lysine isopeptide (Lys-Gly) (interchain with G-Cter in SUMO). Lys572 is subject to N6-succinyllysine. At Ser595 the chain carries Phosphoserine; by CDK2. Lys619 is modified (N6-acetyllysine). At His715 the chain carries Diphthamide.

This sequence belongs to the TRAFAC class translation factor GTPase superfamily. Classic translation factor GTPase family. EF-G/EF-2 subfamily. As to quaternary structure, binds to 80S ribosomes. Actively translating ribosomes show mutually exclusive binding of eIF5a (EIF5A or EIF5A2) and EEF2/eEF2. Interacts with SERBP1; interaction sequesters EEF2/eEF2 at the A-site of the ribosome, thereby blocking the interaction sites of the mRNA-tRNA complex, promoting ribosome stabilization and hibernation. Interacts with HABP4; interaction takes place at the A-site of hibernating ribosomes and promotes ribosome stabilization. Component of the mRNA surveillance SURF complex, at least composed of ERF1, ERF3 (ERF3A or ERF3B), EEF2, UPF1/RENT1, SMG1, SMG8 and SMG9. Interacts with RBPMS2. Post-translationally, phosphorylation by EF-2 kinase completely inactivates EF-2; it requires prior phosphorylation by CDK2 at Ser-595 during mitotic prometaphase. Phosphorylation by CSK promotes SUMOylation, proteolytic cleavage, and nuclear translocation if the C-terminal fragment. Diphthamide is 2-[3-carboxyamido-3-(trimethyl-ammonio)propyl]histidine. In terms of processing, ISGylated. Post-translationally, proteolytically processed at two sites following phosphorylation by CSK. SUMOylated following phosphorylation by CSK, promotes proteolytic cleavage.

The protein resides in the cytoplasm. The protein localises to the nucleus. The enzyme catalyses GTP + H2O = GDP + phosphate + H(+). Its function is as follows. Catalyzes the GTP-dependent ribosomal translocation step during translation elongation. During this step, the ribosome changes from the pre-translocational (PRE) to the post-translocational (POST) state as the newly formed A-site-bound peptidyl-tRNA and P-site-bound deacylated tRNA move to the P and E sites, respectively. Catalyzes the coordinated movement of the two tRNA molecules, the mRNA and conformational changes in the ribosome. The chain is Elongation factor 2 (EEF2) from Pongo abelii (Sumatran orangutan).